A 354-amino-acid polypeptide reads, in one-letter code: Malate dehydrogenase 2, peroxisomal (354 aa).

Residues 10 to 18 (RIARISAHL) form a peroxisomal targeting signal PTS2 region. NAD(+) contacts are provided by residues 49–55 (GAAGGIG) and Asp75. Residues Arg122 and Arg128 each contribute to the substrate site. Residues Asn135 and 158 to 160 (ISN) each bind NAD(+). Substrate contacts are provided by Asn160 and Arg194. The active-site Proton acceptor is the His218. An NAD(+)-binding site is contributed by Met269.

It belongs to the LDH/MDH superfamily. MDH type 1 family. In terms of assembly, homodimer. As to expression, expressed in rosette leaves.

The protein localises to the peroxisome. The enzyme catalyses (S)-malate + NAD(+) = oxaloacetate + NADH + H(+). Its function is as follows. Catalyzes a reversible NAD-dependent dehydrogenase reaction involved in central metabolism and redox homeostasis between organelle compartments. Peroxisomal NAD-dependent malate dehydrogenase involved in fatty acid beta-oxidation. Reoxidizes NADH from the beta-oxidation and provides NAD for the conversion of fatty acyl-CoA to acetyl-CoA. Does not participate directly in the glyoxylate cycle. Required for maintenance of photosynthetic rates under photorespiratory conditions, and carbon flow during photorespiration. Supplies NADH reductant to the peroxisomal hydroxypyruvate reductase (HPR), which reduces hydroxypyruvate into glycerate in the photorespiratory cycle. The protein is Malate dehydrogenase 2, peroxisomal of Arabidopsis thaliana (Mouse-ear cress).